Here is a 550-residue protein sequence, read N- to C-terminus: Metal transporter Nramp3 (550 aa).

Residues 1–26 are compositionally biased toward polar residues; the sequence is MSGPMQRSSQPQFISSVERNNQSNGP. A disordered region spans residues 1 to 30; it reads MSGPMQRSSQPQFISSVERNNQSNGPGTPL. A run of 12 helical transmembrane segments spans residues 50–70, 83–103, 127–147, 158–178, 185–205, 233–253, 276–296, 333–353, 368–390, 397–417, 435–455, and 473–493; these read LFSYIGPGFLVSIAYIDPGNF, ELLWIILIASCAALIIQSLAA, FILWILAELAVVACDIPEVIG, IPVWCGVLITGLSTLMLLLLQ, LEFLIAILVSLIATCFLVELG, ISLLGAMVMPHNLFLHSALVL, AFALTIAFLINISIISVSGAV, LFAVALLASGQSSTITGTYAG, WIRNLLTRSLAILPSLIVSIIGG, LIIIASMILSFELPFALVPLL, ISVITWGIGSFIVVINTYFLI, and VFSGIFGFLGMLIYMAAILYL. Residues 523 to 550 form a disordered region; sequence GEGSLGHLPREDISSMQLPQQRTASDLD. The span at 536–550 shows a compositional bias: polar residues; that stretch reads SSMQLPQQRTASDLD.

The protein belongs to the NRAMP (TC 2.A.55) family.

The protein localises to the membrane. In terms of biological role, probable metal transporter. This is Metal transporter Nramp3 (NRAMP3) from Oryza sativa subsp. japonica (Rice).